A 377-amino-acid chain; its full sequence is Phytanoyl-CoA hydroxylase-interacting protein-like (377 aa).

Residues 52–161 enclose the Fibronectin type-III domain; sequence VPQNIKISNI…EINEFCTADY (110 aa).

The protein belongs to the PHYHIP family.

Functionally, may play a role in the development of the central system. The polypeptide is Phytanoyl-CoA hydroxylase-interacting protein-like (phyhipl) (Danio rerio (Zebrafish)).